The sequence spans 220 residues: B-cell antigen receptor complex-associated protein alpha chain (220 aa).

The N-terminal stretch at 1–28 is a signal peptide; that stretch reads MPGGLEALRALPLLLFLSYACLGPGCQA. Positions 29–117 constitute an Ig-like C2-type domain; that stretch reads LRVEGGPPSL…ILKRSCGTYL (89 aa). The Extracellular segment spans residues 29–137; that stretch reads LRVEGGPPSL…LDMGEGTKNR (109 aa). Residues C50 and C101 are joined by a disulfide bond. N-linked (GlcNAc...) asparagine glycosylation is found at N58 and N68. Residues 138–159 form a helical membrane-spanning segment; sequence IITAEGIILLFCAVVPGTLLLF. The Cytoplasmic portion of the chain corresponds to 160 to 220; sequence RKRWQNEKFG…HIGDAQLEKP (61 aa). Residues 171 to 199 form the ITAM domain; that stretch reads DMPDDYEDENLYEGLNLDDCSMYEDISRG. 2 positions are modified to phosphotyrosine; by SRC-type Tyr-kinases: Y182 and Y193. Residue R198 is modified to Asymmetric dimethylarginine; by PRMT1. Position 204 is a phosphotyrosine; by Tyr-kinases (Y204).

Heterodimer of alpha and beta chains; disulfide-linked. Part of the B-cell antigen receptor complex where the alpha/beta chain heterodimer is non-covalently associated with an antigen-specific membrane-bound surface immunoglobulin of two heavy chains and two light chains. Interacts through its phosphorylated ITAM domain with the SH2 domains of SYK which stimulates SYK autophosphorylation and activation. Also interacts, when phosphorylated on Tyr-204, with the SH2 domain of BLNK/SLP65, bringing BLNK into proximity with SYK and allowing SYK to phosphorylate BLNK which is necessary for trafficking of the BCR to late endosomes. Interacts with Src-family tyrosine kinases including FYN and LYN, increasing their activity. Phosphorylated on tyrosine, serine and threonine residues upon B-cell activation. Phosphorylation of tyrosine residues by Src-family kinases, including LYN, is an early and essential feature of the BCR signaling cascade. The phosphorylated tyrosines serve as docking sites for SH2-domain containing kinases, leading to their activation which in turn leads to phosphorylation of downstream targets. Phosphorylation of serine and threonine residues may prevent subsequent tyrosine phosphorylation. Post-translationally, arginine methylation in the ITAM domain may interfere with the binding of SYK. It promotes signals leading to B-cell differentiation. In terms of tissue distribution, B-cells.

Its subcellular location is the cell membrane. Required in cooperation with CD79B for initiation of the signal transduction cascade activated by binding of antigen to the B-cell antigen receptor complex (BCR) which leads to internalization of the complex, trafficking to late endosomes and antigen presentation. Also required for BCR surface expression and for efficient differentiation of pro- and pre-B-cells. Stimulates SYK autophosphorylation and activation. Binds to BLNK, bringing BLNK into proximity with SYK and allowing SYK to phosphorylate BLNK. Also interacts with and increases activity of some Src-family tyrosine kinases. Represses BCR signaling during development of immature B-cells. The sequence is that of B-cell antigen receptor complex-associated protein alpha chain (Cd79a) from Mus musculus (Mouse).